The chain runs to 391 residues: Succinate--CoA ligase [ADP-forming] subunit beta (391 aa).

The 229-residue stretch at 9 to 237 (RDLFEKHGVP…RATTDPLELR (229 aa)) folds into the ATP-grasp domain. Residues Lys-46, 53 to 55 (GRG), Ala-95, and Glu-100 contribute to the ATP site. Asn-192 and Asp-206 together coordinate Mg(2+). Substrate is bound by residues Asn-257 and 320–322 (GIT).

It belongs to the succinate/malate CoA ligase beta subunit family. In terms of assembly, heterotetramer of two alpha and two beta subunits. It depends on Mg(2+) as a cofactor.

The catalysed reaction is succinate + ATP + CoA = succinyl-CoA + ADP + phosphate. The enzyme catalyses GTP + succinate + CoA = succinyl-CoA + GDP + phosphate. The protein operates within carbohydrate metabolism; tricarboxylic acid cycle; succinate from succinyl-CoA (ligase route): step 1/1. Succinyl-CoA synthetase functions in the citric acid cycle (TCA), coupling the hydrolysis of succinyl-CoA to the synthesis of either ATP or GTP and thus represents the only step of substrate-level phosphorylation in the TCA. The beta subunit provides nucleotide specificity of the enzyme and binds the substrate succinate, while the binding sites for coenzyme A and phosphate are found in the alpha subunit. The protein is Succinate--CoA ligase [ADP-forming] subunit beta of Cutibacterium acnes (strain DSM 16379 / KPA171202) (Propionibacterium acnes).